The sequence spans 407 residues: Imidazolonepropionase (407 aa).

Residues H74 and H76 each coordinate Fe(3+). The Zn(2+) site is built by H74 and H76. 4-imidazolone-5-propanoate contacts are provided by R83, Y146, and H179. An N-formimidoyl-L-glutamate-binding site is contributed by Y146. A Fe(3+)-binding site is contributed by H244. H244 is a Zn(2+) binding site. Q247 contributes to the 4-imidazolone-5-propanoate binding site. Residue D319 participates in Fe(3+) binding. D319 is a binding site for Zn(2+). N-formimidoyl-L-glutamate contacts are provided by N321 and G323. T324 contributes to the 4-imidazolone-5-propanoate binding site.

It belongs to the metallo-dependent hydrolases superfamily. HutI family. It depends on Zn(2+) as a cofactor. Requires Fe(3+) as cofactor.

It is found in the cytoplasm. It carries out the reaction 4-imidazolone-5-propanoate + H2O = N-formimidoyl-L-glutamate. Its pathway is amino-acid degradation; L-histidine degradation into L-glutamate; N-formimidoyl-L-glutamate from L-histidine: step 3/3. In terms of biological role, catalyzes the hydrolytic cleavage of the carbon-nitrogen bond in imidazolone-5-propanoate to yield N-formimidoyl-L-glutamate. It is the third step in the universal histidine degradation pathway. The chain is Imidazolonepropionase from Salmonella typhi.